Consider the following 101-residue polypeptide: Guanyl-specific ribonuclease St (101 aa).

A disulfide bridge links cysteine 4 with cysteine 54. Residue glutamate 61 is the Proton acceptor of the active site. Histidine 91 (proton donor) is an active-site residue.

The protein belongs to the ribonuclease N1/T1 family.

The enzyme catalyses [RNA] containing guanosine + H2O = an [RNA fragment]-3'-guanosine-3'-phosphate + a 5'-hydroxy-ribonucleotide-3'-[RNA fragment].. This Saccharopolyspora erythraea (Streptomyces erythraeus) protein is Guanyl-specific ribonuclease St.